Consider the following 583-residue polypeptide: Kelch-like protein 38 (583 aa).

The 68-residue stretch at 34-101 folds into the BTB domain; it reads TDVILCTEDK…IYTGSITITM (68 aa). The region spanning 136 to 237 is the BACK domain; sequence CLSMIRLSEI…HPTYLFQFIA (102 aa). Kelch repeat units lie at residues 285–332, 333–385, 386–433, 435–481, 482–523, and 525–575; these read TLVV…CIHS, ILYV…SYLH, FIFA…ANDQ, IYVF…VIED, KIYI…VINN, and LYVT…PLIC.

In Danio rerio (Zebrafish), this protein is Kelch-like protein 38 (klhl38).